The primary structure comprises 109 residues: Hainantoxin-XVIII.2 (109 aa).

Residues 1 to 18 (MKLSIIIIVTSLVIAVVA) form the signal peptide. Positions 19-46 (FPSKDSKAIENDKTEQRMEIVVQETARA) are excised as a propeptide. 4 disulfide bridges follow: cysteine 47–cysteine 62, cysteine 55–cysteine 68, cysteine 59–cysteine 108, and cysteine 61–cysteine 81.

Belongs to the neurotoxin 25 family. F7 subfamily. Expressed by the venom gland.

The protein localises to the secreted. In terms of biological role, putative ion channel inhibitor. The protein is Hainantoxin-XVIII.2 of Cyriopagopus hainanus (Chinese bird spider).